Here is an 826-residue protein sequence, read N- to C-terminus: MGKKRTKGKTVPIDDSSETLEPMCRHIRKGLEQGNLKKALVNVEWNICQDCKTDNKVKDKAEEETEEKPSVWLCLKCGHQGCGRNSQEQHALKHYLTPRSEPHCLVLSLDNWSVWCYICDNEVQYCSSNQLGQVVDYVRKQASITTPKPAEKDNGNIELENKKLEKESKNEQEREKKENMAKENPPMNSPSQITVKGLSNLGNTCFFNAVMQNLSQTPVLRELLKEVKMSGTIVKIEPPDLALTEPLEINLEPPGPLTLAMSQFLNEMQETKKGIVTPKELFSQVCKKAVRFKGYQQQDSQELLRYLLDGMRAEEHQRVSKGILKAFGNSTEKLDEELKNKVKDYEKKKSIPSFVDRIFGGELTSTIMCDQCRTVSLVHESFLDLSLPVLDDQSGKKSVNDKNLKKTMEDEDQDSEEEKDNDSYIKERSDIPSGTSKHLQKKAKKQAKKQAKNQRRQQKIQGKVLHLNDICTIDHPEDNEYEAEMSLQGEVNIKSNHISQEGVMHKEYCVNQKDLNGQEKMIESVTDNQKPTEEVDMKNINMDNDLEVLTSSPTECTRNLNGAYLTEASNGEVDISNGFKNLNLNAALHPDEINIEILNDSHTPGTKVYEVVNEDPETAFCTLANREVFNTDECSIQHCLYQFTRNEKLRDANKLLCEVCTRRQCNGPKANMKGERKHVYTNAKKQMLISLAPPVLTLHLKRFQQAGFNLRKVNKHIKFPEILDLAPFCTLKCKNVAEENTRVLYSLYGVVEHSGTMRSGHYTAYAKARTANSHLSNLVLHGDIPQDFEMESKGQWFHISDTHVQAVPTTKVLNSQAYLLFYERIL.

Residues 22–142 (PMCRHIRKGL…QVVDYVRKQA (121 aa)) form a UBP-type zinc finger. Zn(2+) contacts are provided by Cys24, His26, Cys48, Cys51, Cys74, Cys77, Cys82, His90, His94, His103, Cys116, and Cys119. Lys140 is covalently cross-linked (Glycyl lysine isopeptide (Lys-Gly) (interchain with G-Cter in SUMO2)). Residues 146–190 (TPKPAEKDNGNIELENKKLEKESKNEQEREKKENMAKENPPMNSP) are disordered. Positions 149–181 (PAEKDNGNIELENKKLEKESKNEQEREKKENMA) are enriched in basic and acidic residues. A Phosphoserine modification is found at Ser189. Residues 196-825 (KGLSNLGNTC…QAYLLFYERI (630 aa)) enclose the USP domain. The active-site Nucleophile is the Cys205. A compositionally biased stretch (basic and acidic residues) spans 394–408 (SGKKSVNDKNLKKTM). A disordered region spans residues 394–460 (SGKKSVNDKN…AKNQRRQQKI (67 aa)). Acidic residues predominate over residues 409–420 (EDEDQDSEEEKD). Ser415 is subject to Phosphoserine. Positions 421-430 (NDSYIKERSD) are enriched in basic and acidic residues. Positions 438-458 (HLQKKAKKQAKKQAKNQRRQQ) are enriched in basic residues. Ser552 is subject to Phosphoserine. Thr557 carries the post-translational modification Phosphothreonine. The active-site Proton acceptor is His761.

It belongs to the peptidase C19 family. USP16 subfamily. In terms of assembly, homotetramer. Associates with late pre-40S ribosomes. Interacts with CEP78; promoting deubiquitination of tektins. Post-translationally, phosphorylated at the onset of mitosis and dephosphorylated during the metaphase/anaphase transition. Phosphorylation by AURKB enhances the deubiquitinase activity.

Its subcellular location is the nucleus. It carries out the reaction Thiol-dependent hydrolysis of ester, thioester, amide, peptide and isopeptide bonds formed by the C-terminal Gly of ubiquitin (a 76-residue protein attached to proteins as an intracellular targeting signal).. Functionally, specifically deubiquitinates 'Lys-120' of histone H2A (H2AK119Ub), a specific tag for epigenetic transcriptional repression, thereby acting as a coactivator. Deubiquitination of histone H2A is a prerequisite for subsequent phosphorylation at 'Ser-11' of histone H3 (H3S10ph), and is required for chromosome segregation when cells enter into mitosis. In resting B- and T-lymphocytes, phosphorylation by AURKB leads to enhance its activity, thereby maintaining transcription in resting lymphocytes. Regulates Hox gene expression via histone H2A deubiquitination. Prefers nucleosomal substrates. Does not deubiquitinate histone H2B. Also deubiquitinates non-histone proteins, such as ribosomal protein RPS27A: deubiquitination of monoubiquitinated RPS27A promotes maturation of the 40S ribosomal subunit. Also mediates deubiquitination of tektin proteins (TEKT1, TEKT2, TEK3, TEKT4 and TEKT5), promoting their stability. The sequence is that of Ubiquitin carboxyl-terminal hydrolase 16 from Macaca fascicularis (Crab-eating macaque).